Reading from the N-terminus, the 236-residue chain is uncharacterized protein (236 aa).

Residues 15 to 34 (GGMAHIISEAVIAGSIGLYF) form a helical membrane-spanning segment. Residues 36–71 (KKISALEQTVQELQSQLEVQNNQLQWLIQQQTRRLA) are a coiled coil. Disordered regions lie at residues 83–113 (SPLP…FQFK) and 185–236 (ATTQ…IDCE). Composition is skewed to polar residues over residues 93 to 102 (QQSTTTNAAG) and 185 to 195 (ATTQVSTFSKP). Basic and acidic residues predominate over residues 225-236 (ALDKILNDIDCE).

It is found in the membrane. This is an uncharacterized protein from Aedes vexans (Inland floodwater mosquito).